We begin with the raw amino-acid sequence, 510 residues long: NAD(P)H-quinone oxidoreductase subunit 2 A, chloroplastic (510 aa).

13 helical membrane-spanning segments follow: residues 24–44 (LLLFDGSLIFPECILIFGLIL), 57–77 (IPWLYFISSTSLVMSITALLF), 99–119 (IFQFLILLCSTLCIPLSVEYI), 124–144 (MAITEFLLFVLTATLGGMFLC), 149–169 (LITIFVAPECFSLCSYLLSGY), 183–203 (YLLMGGASSSILVHGFSWLYG), 227–247 (PGISIALIFITVGIGFKLSPA), 295–315 (WHLLLEILAILSMILGNLIAI), 323–343 (MLAYSSIGQIGYVIIGIIVGD), 354–374 (YMLFYISMNLGTFACIVLFGL), 395–415 (ALSLALCLLSLGGLPPLAGFF), 418–438 (LYLFWCGWQAGLYFLVLIGLL), and 484–504 (MIVCVIASTIPGISMNPIIAI).

This sequence belongs to the complex I subunit 2 family. As to quaternary structure, NDH is composed of at least 16 different subunits, 5 of which are encoded in the nucleus.

It is found in the plastid. The protein localises to the chloroplast thylakoid membrane. It catalyses the reaction a plastoquinone + NADH + (n+1) H(+)(in) = a plastoquinol + NAD(+) + n H(+)(out). The enzyme catalyses a plastoquinone + NADPH + (n+1) H(+)(in) = a plastoquinol + NADP(+) + n H(+)(out). Its function is as follows. NDH shuttles electrons from NAD(P)H:plastoquinone, via FMN and iron-sulfur (Fe-S) centers, to quinones in the photosynthetic chain and possibly in a chloroplast respiratory chain. The immediate electron acceptor for the enzyme in this species is believed to be plastoquinone. Couples the redox reaction to proton translocation, and thus conserves the redox energy in a proton gradient. This Solanum bulbocastanum (Wild potato) protein is NAD(P)H-quinone oxidoreductase subunit 2 A, chloroplastic.